The following is a 250-amino-acid chain: 2,3-bisphosphoglycerate-dependent phosphoglycerate mutase (250 aa).

(2R)-2,3-bisphosphoglycerate-binding residues include R10, H11, N17, G24, R62, E89, Y92, K100, R116, R117, H184, G185, and N186. H11 (tele-phosphohistidine intermediate) is an active-site residue. G24 provides a ligand contact to (2R)-3-phosphoglycerate. 5 residues coordinate (2R)-3-phosphoglycerate: E89, Y92, K100, R116, and R117. The active-site Proton donor/acceptor is the E89. Position 186 (N186) interacts with (2R)-3-phosphoglycerate.

The protein belongs to the phosphoglycerate mutase family. BPG-dependent PGAM subfamily. Ubiquitously expressed with the highest expression in the sub-tegumental muscle layer (at protein level). Expressed in the tegument (at protein level).

It localises to the tegument. It carries out the reaction (2R)-2-phosphoglycerate = (2R)-3-phosphoglycerate. It participates in carbohydrate degradation; glycolysis; pyruvate from D-glyceraldehyde 3-phosphate: step 3/5. Strongly activated by 2,3-bisphosphoglycerate (2,3-BPG). Inhibited by vanadate in a dose-dependent manner. Catalyzes interconversion of 3- and 2-phosphoglycerate with 2,3-bisphosphoglycerate (2,3-BPG) as the primer of the reaction. Schistosomula have significant surface phosphoglycerate mutase activity also without 2,3-BPG. Binds human plasminogen and enhances its conversion to active thrombolytic plasmin in the presence of human tissue plasminogen activator (tPA) in vitro. Host-interactive surface protein, which may degrade vascular blood clots surrounding the worm in vivo and thus may help survival of the parasite in its host microenvironment. The sequence is that of 2,3-bisphosphoglycerate-dependent phosphoglycerate mutase from Schistosoma mansoni (Blood fluke).